A 545-amino-acid chain; its full sequence is MAAKAIIYNEEARAKLKAGVDKLANAVKVTLGPKGREVILGKNWGTPVVTKDGVTVAKEIELKDKFENIGAQLVKEVASKTADVAGDGTTTATVLAQAIFHEGLRVAASGANVMEVKRGIDKAVKKIVEELKKLSKDVKERKEIEQVATISANNDPEIGKIIADAMEEVGKDGVITVEESKSAETTLEVVKGMQFDRGYLSPYFVTDPEKMECVLENPYILIYEKKITNVKELLPILEQVVRSGRPLLVIAEDVEGEALATLVVNHIKGVLKACAVKAPGFGQRRKDYLGDIAVLTGGQAITEDLGIKLESVTLDMLGQAEKVVVDKEHTTIIGGKGDPEQIKARIEQIKRQIQETTSDYDREKLQERLAKLSGGVAIIRVGAATEAELKEKKYRVEDAVHATKAAVEEGIVPGGGVALVRASEALEDLKGDNHDQQLGIDIIKKAVRTPLKQIAYNAGYDGSVVLEKVIELGKEKGVSWGFNAATGEYVDMYEAGIIDPTKVVRTAIENAASVAGTMLTAEALIADLPEEKKKDITPTDMPELD.

ATP-binding positions include 30–33 (TLGP), Lys51, 87–91 (DGTTT), Gly415, 483–485 (NAA), and Asp499.

It belongs to the chaperonin (HSP60) family. As to quaternary structure, forms a cylinder of 14 subunits composed of two heptameric rings stacked back-to-back. Interacts with the co-chaperonin GroES.

The protein resides in the cytoplasm. The catalysed reaction is ATP + H2O + a folded polypeptide = ADP + phosphate + an unfolded polypeptide.. Together with its co-chaperonin GroES, plays an essential role in assisting protein folding. The GroEL-GroES system forms a nano-cage that allows encapsulation of the non-native substrate proteins and provides a physical environment optimized to promote and accelerate protein folding. The sequence is that of Chaperonin GroEL from Aquifex aeolicus (strain VF5).